Reading from the N-terminus, the 374-residue chain is RNA binding protein fox-1 homolog 3 (374 aa).

Positions 1–29 are enriched in pro residues; that stretch reads MAQPYPPAQYPPPPQNGIPAEYAPPPPHP. Positions 1-105 are disordered; it reads MAQPYPPAQY…QQPKRLHVSN (105 aa). The span at 49 to 74 shows a compositional bias: polar residues; sequence TPAQTHPEQPGTEASTQPIAGTQTVP. One can recognise an RRM domain in the interval 99–175; sequence KRLHVSNIPF…RKIEVNNATA (77 aa). Arg223 bears the Asymmetric dimethylarginine; alternate mark. An Omega-N-methylarginine; alternate modification is found at Arg223. Arg319 carries the asymmetric dimethylarginine modification.

Post-translationally, phosphorylated. In terms of tissue distribution, widely expressed in brain, including in cerebral cortex, hippocampus, thalamus, caudate/putamen, cerebellum, as well as in the spinal cord (at protein level). Not expressed in all neuronal cells within a region, in cerebellum, expression is absent in Purkinje cells (at protein level). Expressed in the retina in the ganglion cells and some cells in the inner nuclear layer, but absent from the photoreceptor cells and most cells in the inner nuclear layer (at protein level).

It localises to the nucleus. Its subcellular location is the cytoplasm. Functionally, pre-mRNA alternative splicing regulator. Regulates alternative splicing of RBFOX2 to enhance the production of mRNA species that are targeted for nonsense-mediated decay (NMD). This is RNA binding protein fox-1 homolog 3 (Rbfox3) from Mus musculus (Mouse).